The sequence spans 342 residues: GTPase Obg (342 aa).

The 159-residue stretch at 1-159 (MQFIDRAEIE…RHLRLELKLL (159 aa)) folds into the Obg domain. One can recognise an OBG-type G domain in the interval 160-328 (AEVGIIGLPN…LLAKVWQQLE (169 aa)). Residues 166–173 (GLPNAGKS), 191–195 (FTTLI), 213–216 (DIPG), 280–283 (NKID), and 309–311 (SAV) contribute to the GTP site. 2 residues coordinate Mg(2+): Ser173 and Thr193.

The protein belongs to the TRAFAC class OBG-HflX-like GTPase superfamily. OBG GTPase family. As to quaternary structure, monomer. Mg(2+) serves as cofactor.

It is found in the cytoplasm. In terms of biological role, an essential GTPase which binds GTP, GDP and possibly (p)ppGpp with moderate affinity, with high nucleotide exchange rates and a fairly low GTP hydrolysis rate. Plays a role in control of the cell cycle, stress response, ribosome biogenesis and in those bacteria that undergo differentiation, in morphogenesis control. The protein is GTPase Obg of Microcystis aeruginosa (strain NIES-843 / IAM M-2473).